Reading from the N-terminus, the 385-residue chain is Na(+)/H(+) antiporter NhaA (385 aa).

Transmembrane regions (helical) follow at residues 9–29, 45–65, 87–107, 114–134, 155–175, 198–218, 220–235, 245–265, 282–302, 312–332, and 345–365; these read YSAI…NVLD, IFGL…VFFF, IIPG…YLSV, GWPV…AIFG, AGIV…WIIV, TFLI…SVYQ, GIHA…IMLN, ALEP…AAMV, ILLG…IIAL, FFNL…SLLM, and QGVI…IILM.

Belongs to the NhaA Na(+)/H(+) (TC 2.A.33) antiporter family.

The protein localises to the cell membrane. The enzyme catalyses Na(+)(in) + 2 H(+)(out) = Na(+)(out) + 2 H(+)(in). Functionally, na(+)/H(+) antiporter that extrudes sodium in exchange for external protons. The polypeptide is Na(+)/H(+) antiporter NhaA (Tropheryma whipplei (strain TW08/27) (Whipple's bacillus)).